Reading from the N-terminus, the 211-residue chain is MEFPNCTVVDHPLVKHKLTQMRRVETSTASFRALLQEISLLLAYEALRDLKVREEDIQTPMARTVAPVLDGKKLVLVAIMRAGQGILDGMLQLVPSARVGHIGLYRDPETLSPVEYYYRVPGQLADRDVVVCDPMLATGNSAVAALQRLKKSKPGSLRFVCLLACPEGLTNLREHHPDVHVYTAAIDERLDEHGYILPGLGDAGDRLFGTK.

Residues arginine 81, arginine 106, and aspartate 133–serine 141 each bind 5-phospho-alpha-D-ribose 1-diphosphate. Residues isoleucine 196 and glycine 201 to alanine 203 each bind uracil. A 5-phospho-alpha-D-ribose 1-diphosphate-binding site is contributed by aspartate 202.

The protein belongs to the UPRTase family. Mg(2+) serves as cofactor.

It catalyses the reaction UMP + diphosphate = 5-phospho-alpha-D-ribose 1-diphosphate + uracil. The protein operates within pyrimidine metabolism; UMP biosynthesis via salvage pathway; UMP from uracil: step 1/1. Allosterically activated by GTP. Catalyzes the conversion of uracil and 5-phospho-alpha-D-ribose 1-diphosphate (PRPP) to UMP and diphosphate. This Myxococcus xanthus (strain DK1622) protein is Uracil phosphoribosyltransferase.